Consider the following 375-residue polypeptide: 4,4'-diaponeurosporenoate glycosyltransferase (375 aa).

4 consecutive transmembrane segments (helical) span residues W3–F23, F164–S184, I277–L297, and F330–I350.

Belongs to the glycosyltransferase 2 family. CrtQ subfamily.

Its subcellular location is the cell membrane. It functions in the pathway carotenoid biosynthesis; staphyloxanthin biosynthesis; staphyloxanthin from farnesyl diphosphate: step 4/5. Its function is as follows. Catalyzes the glycosylation of 4,4'-diaponeurosporenoate, i.e. the esterification of glucose at the C1'' position with the carboxyl group of 4,4'-diaponeurosporenic acid, to form glycosyl-4,4'-diaponeurosporenoate. This is a step in the biosynthesis of staphyloxanthin, an orange pigment present in most staphylococci strains. This Staphylococcus aureus (strain USA300) protein is 4,4'-diaponeurosporenoate glycosyltransferase (crtQ).